A 382-amino-acid polypeptide reads, in one-letter code: Ribosomal RNA large subunit methyltransferase G (382 aa).

It belongs to the methyltransferase superfamily. RlmG family.

The protein resides in the cytoplasm. It catalyses the reaction guanosine(1835) in 23S rRNA + S-adenosyl-L-methionine = N(2)-methylguanosine(1835) in 23S rRNA + S-adenosyl-L-homocysteine + H(+). In terms of biological role, specifically methylates the guanine in position 1835 (m2G1835) of 23S rRNA. The chain is Ribosomal RNA large subunit methyltransferase G from Pseudoalteromonas translucida (strain TAC 125).